We begin with the raw amino-acid sequence, 106 residues long: UPF0145 protein BDI_2732 (106 aa).

Belongs to the UPF0145 family.

The sequence is that of UPF0145 protein BDI_2732 from Parabacteroides distasonis (strain ATCC 8503 / DSM 20701 / CIP 104284 / JCM 5825 / NCTC 11152).